Consider the following 226-residue polypeptide: Transcription repressor OFP12 (226 aa).

Residues 68-87 are compositionally biased toward low complexity; that stretch reads SSTFTASTSTAANSSSSSAS. The tract at residues 68–104 is disordered; it reads SSTFTASTSTAANSSSSSASYDDSDNYGFAPDDDSPP. In terms of domain architecture, OVATE spans 152 to 217; sequence VKHYVQSPDP…IRAFADILVS (66 aa).

In terms of assembly, interacts with KNAT1, KNAT2, KNAT3 and KNAT4. In terms of tissue distribution, expressed in roots, shoots, stems, flower buds and siliques.

The protein localises to the nucleus. Functionally, transcriptional repressor that regulates multiple aspects of plant growth and development through the regulation of BEL1-LIKE (BLH) and KNOX TALE (KNAT) homeodomain transcription factors. The polypeptide is Transcription repressor OFP12 (OFP12) (Arabidopsis thaliana (Mouse-ear cress)).